A 505-amino-acid chain; its full sequence is uncharacterized protein (505 aa).

The region spanning 193–440 (CTNKKCNLCE…LEIKKKYIGR (248 aa)) is the Radical SAM core domain. [4Fe-4S] cluster contacts are provided by cysteine 208, cysteine 216, and cysteine 219. Residues 435-499 (KKYIGRVLEV…EKYLEGRILK (65 aa)) enclose the TRAM domain.

It depends on [4Fe-4S] cluster as a cofactor.

This is an uncharacterized protein from Methanocaldococcus jannaschii (strain ATCC 43067 / DSM 2661 / JAL-1 / JCM 10045 / NBRC 100440) (Methanococcus jannaschii).